Consider the following 262-residue polypeptide: 2-aminoethylphosphonate dioxygenase (262 aa).

K108 provides a ligand contact to 2-oxoglutarate. Positions 118, 120, and 198 each coordinate Fe cation.

This sequence belongs to the PhyH family. Requires Fe(2+) as cofactor.

The enzyme catalyses (2-aminoethyl)phosphonate + 2-oxoglutarate + O2 = (1R)-(2-amino-1-hydroxyethyl)phosphonate + succinate + CO2. With respect to regulation, activity is enhanced by ascorbate. Involved in the degradation of the organophosphonate 2-aminoethylphosphonic acid (2-AEP). Catalyzes the hydroxylation of 2-aminoethylphosphonic acid to yield (2-amino-1-hydroxyethyl)phosphonic acid. The sequence is that of 2-aminoethylphosphonate dioxygenase from Uncultured bacterium HF130_AEPn_1.